The sequence spans 252 residues: Pyrroloquinoline-quinone synthase (252 aa).

Belongs to the PqqC family.

The catalysed reaction is 6-(2-amino-2-carboxyethyl)-7,8-dioxo-1,2,3,4,7,8-hexahydroquinoline-2,4-dicarboxylate + 3 O2 = pyrroloquinoline quinone + 2 H2O2 + 2 H2O + H(+). The protein operates within cofactor biosynthesis; pyrroloquinoline quinone biosynthesis. Its function is as follows. Ring cyclization and eight-electron oxidation of 3a-(2-amino-2-carboxyethyl)-4,5-dioxo-4,5,6,7,8,9-hexahydroquinoline-7,9-dicarboxylic-acid to PQQ. This Acinetobacter baumannii (strain AB307-0294) protein is Pyrroloquinoline-quinone synthase.